Here is a 373-residue protein sequence, read N- to C-terminus: Probable G-protein coupled receptor 45 (373 aa).

The Extracellular portion of the chain corresponds to 1–38 (MACNSTPMGTYEHLLLNVSNTLDPGDTPLSAPLRISLA). A glycan (N-linked (GlcNAc...) asparagine) is linked at Asn-17. Residues 39-59 (IMMLLMIVVGFLGNTVVCIIV) traverse the membrane as a helical segment. At 60–75 (YQRPAMRSAINLLLAT) the chain is on the cytoplasmic side. A helical membrane pass occupies residues 76-96 (LAFSDIMLSLCCMPFTAITLI). Topologically, residues 97–109 (TVRWHFGDHFCRL) are extracellular. A helical transmembrane segment spans residues 110–130 (SATLYWFFVLEGVAILLIISV). Residues 131–149 (DRFLIIVQRQDKLNPRRAK) are Cytoplasmic-facing. A helical membrane pass occupies residues 150–170 (MIIAASWVLSFCISAPSFTGW). Topologically, residues 171-198 (TFMEVPARAPQCVLGYTEFPAERAYVVT) are extracellular. Residues 199–219 (LVVAVFFAPFGVMLCSYLCIL) traverse the membrane as a helical segment. Over 220-269 (NTVRKNAVRVHNQSDSLDLRQLTGAGLRRLRRQQQQASLDLSFKTKAFTT) the chain is Cytoplasmic. The helical transmembrane segment at 270 to 290 (ILILFVGFSLCWLPHSVYSLL) threads the bilayer. At 291–306 (SAFSRRFYYSASFYTT) the chain is on the extracellular side. A helical membrane pass occupies residues 307–327 (STCVLWLSYLKSVFNPIVYCW). At 328–373 (RIKKFREACIELLPHTFQILPKVPERIQRKIQPSTIYVCNENQSAV) the chain is on the cytoplasmic side.

It belongs to the G-protein coupled receptor 1 family. In terms of tissue distribution, brain specific.

The protein localises to the cell membrane. Its function is as follows. Orphan receptor. May play a role in brain function. The chain is Probable G-protein coupled receptor 45 (Gpr45) from Mus musculus (Mouse).